The sequence spans 391 residues: ATP phosphoribosyltransferase regulatory subunit (391 aa).

Belongs to the class-II aminoacyl-tRNA synthetase family. HisZ subfamily. As to quaternary structure, heteromultimer composed of HisG and HisZ subunits.

Its subcellular location is the cytoplasm. Its pathway is amino-acid biosynthesis; L-histidine biosynthesis; L-histidine from 5-phospho-alpha-D-ribose 1-diphosphate: step 1/9. Required for the first step of histidine biosynthesis. May allow the feedback regulation of ATP phosphoribosyltransferase activity by histidine. This Bacillus pumilus (strain SAFR-032) protein is ATP phosphoribosyltransferase regulatory subunit.